The following is a 181-amino-acid chain: Transmembrane protein 47 (181 aa).

N-acetylalanine is present on Ala-2. Helical transmembrane passes span 21–41 (LVGL…VLSP), 83–103 (ALLL…LISI), 115–135 (VAVM…LYPI), and 152–172 (GYGL…LYCL).

The protein belongs to the TMEM47 family. As to quaternary structure, interacts with CTNNB1, CTNNA1, PRKCI, PARD6B. Interacts with FYB1. In terms of tissue distribution, expressed in podocytes (at protein level).

It is found in the membrane. The protein localises to the cell junction. Its subcellular location is the adherens junction. Its function is as follows. Regulates cell junction organization in epithelial cells. May play a role in the transition from adherens junction to tight junction assembly. May regulate F-actin polymerization required for tight junctional localization dynamics and affect the junctional localization of PARD6B. During podocyte differentiation may negatively regulate activity of FYN and subsequently the abundance of nephrin. The sequence is that of Transmembrane protein 47 (Tmem47) from Mus musculus (Mouse).